The sequence spans 663 residues: UvrABC system protein B (663 aa).

One can recognise a Helicase ATP-binding domain in the interval 31–271 (DNIEGGEKAQ…EASIAKIQAE (241 aa)). 44–51 (GATGTGKT) contacts ATP. A Beta-hairpin motif is present at residues 97-120 (YYDYYQPEAYVPSSDTYIEKDSSV). In terms of domain architecture, Helicase C-terminal spans 435–601 (QMDDLLGEIN…TIKKEIRDLI (167 aa)). Residues 627–662 (QEAIKKLQKQMHEAAELLDFELAAQIRDMVLELKSM) enclose the UVR domain.

The protein belongs to the UvrB family. As to quaternary structure, forms a heterotetramer with UvrA during the search for lesions. Interacts with UvrC in an incision complex.

The protein localises to the cytoplasm. The UvrABC repair system catalyzes the recognition and processing of DNA lesions. A damage recognition complex composed of 2 UvrA and 2 UvrB subunits scans DNA for abnormalities. Upon binding of the UvrA(2)B(2) complex to a putative damaged site, the DNA wraps around one UvrB monomer. DNA wrap is dependent on ATP binding by UvrB and probably causes local melting of the DNA helix, facilitating insertion of UvrB beta-hairpin between the DNA strands. Then UvrB probes one DNA strand for the presence of a lesion. If a lesion is found the UvrA subunits dissociate and the UvrB-DNA preincision complex is formed. This complex is subsequently bound by UvrC and the second UvrB is released. If no lesion is found, the DNA wraps around the other UvrB subunit that will check the other stand for damage. This is UvrABC system protein B from Streptococcus uberis (strain ATCC BAA-854 / 0140J).